The sequence spans 449 residues: Glutamyl-tRNA reductase (449 aa).

Substrate is bound by residues 58-61, S121, 126-128, and Q132; these read TCNR and ETQ. The active-site Nucleophile is C59. 203-208 provides a ligand contact to NADP(+); sequence GLGEMA.

This sequence belongs to the glutamyl-tRNA reductase family. Homodimer.

It carries out the reaction (S)-4-amino-5-oxopentanoate + tRNA(Glu) + NADP(+) = L-glutamyl-tRNA(Glu) + NADPH + H(+). It participates in porphyrin-containing compound metabolism; protoporphyrin-IX biosynthesis; 5-aminolevulinate from L-glutamyl-tRNA(Glu): step 1/2. In terms of biological role, catalyzes the NADPH-dependent reduction of glutamyl-tRNA(Glu) to glutamate 1-semialdehyde (GSA). This chain is Glutamyl-tRNA reductase, found in Helicobacter pylori (strain G27).